We begin with the raw amino-acid sequence, 332 residues long: Probable sugar phosphate/phosphate translocator At1g53660 (332 aa).

10 consecutive transmembrane segments (helical) span residues 19–39, 46–66, 82–102, 120–140, 143–163, 165–185, 199–219, 233–253, 259–281, and 285–304; these read ASIL…KWVL, FPYP…LCFL, LEIY…TLWL, AIMP…IMSC, LLIM…ELNI, WVGV…LILM, LSLM…PWIF, LVLS…FLVI, LTIR…LLFA, and LTII…ATYN. Over residues 312–322 the composition is skewed to polar residues; the sequence is ESITLVSQSPK. The tract at residues 312 to 332 is disordered; sequence ESITLVSQSPKNSDKKPDGPL. The span at 323 to 332 shows a compositional bias: basic and acidic residues; sequence NSDKKPDGPL.

Belongs to the TPT transporter family. TPT (TC 2.A.7.9) subfamily.

The protein localises to the membrane. This is Probable sugar phosphate/phosphate translocator At1g53660 from Arabidopsis thaliana (Mouse-ear cress).